The primary structure comprises 363 residues: Probable endopolygalacturonase B (363 aa).

The N-terminal stretch at 1-20 (MQLLQSSVIAATVGAALVAA) is a signal peptide. A propeptide spanning residues 21-28 (VPVELEAR) is cleaved from the precursor. C31 and C46 are joined by a disulfide. 6 PbH1 repeats span residues 158 to 187 (SDNL…DVGS), 188 to 209 (STYI…AINS), 210 to 230 (GSHI…SIGS), 239 to 260 (VEDV…RIKT), 268 to 290 (VSNV…IVEQ), and 302 to 347 (TNGI…SITG). Residue N162 is glycosylated (N-linked (GlcNAc...) asparagine). D202 (proton donor) is an active-site residue. Cysteines 204 and 220 form a disulfide. H224 is a catalytic residue. 2 disulfides stabilise this stretch: C330–C335 and C354–C363.

Belongs to the glycosyl hydrolase 28 family.

The protein resides in the secreted. The catalysed reaction is (1,4-alpha-D-galacturonosyl)n+m + H2O = (1,4-alpha-D-galacturonosyl)n + (1,4-alpha-D-galacturonosyl)m.. Involved in maceration and soft-rotting of plant tissue. Hydrolyzes the 1,4-alpha glycosidic bonds of de-esterified pectate in the smooth region of the plant cell wall. In Aspergillus flavus (strain ATCC 200026 / FGSC A1120 / IAM 13836 / NRRL 3357 / JCM 12722 / SRRC 167), this protein is Probable endopolygalacturonase B (pgaB).